The chain runs to 138 residues: Ergosterol biosynthetic protein 28 (138 aa).

The chain crosses the membrane as a helical span at residues 17–33; sequence LPYWLLFISVVSIFNSV. The N-linked (GlcNAc...) asparagine glycan is linked to Asn40. 3 helical membrane passes run 56–75, 87–107, and 114–131; these read LSARTFGTWTLITSIVRFYG, LTQFTFAIAAWHFLSEWLYFG, and GLSGPLIVSSVSLVWMYL.

This sequence belongs to the ERG28 family. In terms of assembly, heterotetramer of ERG25, ERG26, ERG27 and ERG28. ERG28 acts as a scaffold to tether ERG27 and other 4,4-demethylation-related enzymes, forming a demethylation enzyme complex, in the endoplasmic reticulum. Interacts with ERG25, ERG26 and ERG27. Also interacts with ERG1, ERG3, ERG5, ERG6 and ERG11.

The protein resides in the endoplasmic reticulum membrane. Functionally, part of the third module of ergosterol biosynthesis pathway that includes the late steps of the pathway. ERG28 has a role as a scaffold to help anchor the catalytic components of the C-4 demethylation complex ERG25, ERG26 and ERG27 to the endoplasmic reticulum. The third module or late pathway involves the ergosterol synthesis itself through consecutive reactions that mainly occur in the endoplasmic reticulum (ER) membrane. Firstly, the squalene synthase ERG9 catalyzes the condensation of 2 farnesyl pyrophosphate moieties to form squalene, which is the precursor of all steroids. Squalene synthase is crucial for balancing the incorporation of farnesyl diphosphate (FPP) into sterol and nonsterol isoprene synthesis. Secondly, the squalene epoxidase ERG1 catalyzes the stereospecific oxidation of squalene to (S)-2,3-epoxysqualene, which is considered to be a rate-limiting enzyme in steroid biosynthesis. Then, the lanosterol synthase ERG7 catalyzes the cyclization of (S)-2,3 oxidosqualene to lanosterol, a reaction that forms the sterol core. In the next steps, lanosterol is transformed to zymosterol through a complex process involving various demethylation, reduction and desaturation reactions. The lanosterol 14-alpha-demethylase ERG11 (also known as CYP51) catalyzes C14-demethylation of lanosterol to produce 4,4'-dimethyl cholesta-8,14,24-triene-3-beta-ol, which is critical for ergosterol biosynthesis. The C-14 reductase ERG24 reduces the C14=C15 double bond of 4,4-dimethyl-cholesta-8,14,24-trienol to produce 4,4-dimethyl-cholesta-8,24-dienol. 4,4-dimethyl-cholesta-8,24-dienol is substrate of the C-4 demethylation complex ERG25-ERG26-ERG27 in which ERG25 catalyzes the three-step monooxygenation required for the demethylation of 4,4-dimethyl and 4alpha-methylsterols, ERG26 catalyzes the oxidative decarboxylation that results in a reduction of the 3-beta-hydroxy group at the C-3 carbon to an oxo group, and ERG27 is responsible for the reduction of the keto group on the C-3. ERG28 has a role as a scaffold to help anchor ERG25, ERG26 and ERG27 to the endoplasmic reticulum and ERG29 regulates the activity of the iron-containing C4-methylsterol oxidase ERG25. Then, the sterol 24-C-methyltransferase ERG6 catalyzes the methyl transfer from S-adenosyl-methionine to the C-24 of zymosterol to form fecosterol. The C-8 sterol isomerase ERG2 catalyzes the reaction which results in unsaturation at C-7 in the B ring of sterols and thus converts fecosterol to episterol. The sterol-C5-desaturase ERG3 then catalyzes the introduction of a C-5 double bond in the B ring to produce 5-dehydroepisterol. The C-22 sterol desaturase ERG5 further converts 5-dehydroepisterol into ergosta-5,7,22,24(28)-tetraen-3beta-ol by forming the C-22(23) double bond in the sterol side chain. Finally, ergosta-5,7,22,24(28)-tetraen-3beta-ol is substrate of the C-24(28) sterol reductase ERG4 to produce ergosterol. In Candida albicans (strain SC5314 / ATCC MYA-2876) (Yeast), this protein is Ergosterol biosynthetic protein 28.